The chain runs to 273 residues: Putative pyruvate, phosphate dikinase regulatory protein (273 aa).

149–156 serves as a coordination point for ADP; that stretch reads GPSRTSKT.

It belongs to the pyruvate, phosphate/water dikinase regulatory protein family. PDRP subfamily.

The catalysed reaction is N(tele)-phospho-L-histidyl/L-threonyl-[pyruvate, phosphate dikinase] + ADP = N(tele)-phospho-L-histidyl/O-phospho-L-threonyl-[pyruvate, phosphate dikinase] + AMP + H(+). It carries out the reaction N(tele)-phospho-L-histidyl/O-phospho-L-threonyl-[pyruvate, phosphate dikinase] + phosphate + H(+) = N(tele)-phospho-L-histidyl/L-threonyl-[pyruvate, phosphate dikinase] + diphosphate. Its function is as follows. Bifunctional serine/threonine kinase and phosphorylase involved in the regulation of the pyruvate, phosphate dikinase (PPDK) by catalyzing its phosphorylation/dephosphorylation. The sequence is that of Putative pyruvate, phosphate dikinase regulatory protein from Rickettsia bellii (strain RML369-C).